The chain runs to 178 residues: Bifunctional protein PyrR (178 aa).

Positions 99–111 match the PRPP-binding motif; sequence VIIVDDVLYTCRT.

This sequence belongs to the purine/pyrimidine phosphoribosyltransferase family. PyrR subfamily. In terms of assembly, homodimer and homohexamer; in equilibrium.

It catalyses the reaction UMP + diphosphate = 5-phospho-alpha-D-ribose 1-diphosphate + uracil. In terms of biological role, regulates transcriptional attenuation of the pyrimidine nucleotide (pyr) operon by binding in a uridine-dependent manner to specific sites on pyr mRNA. This disrupts an antiterminator hairpin in the RNA and favors formation of a downstream transcription terminator, leading to a reduced expression of downstream genes. Also displays a weak uracil phosphoribosyltransferase activity which is not physiologically significant. The sequence is that of Bifunctional protein PyrR from Clostridium perfringens (strain ATCC 13124 / DSM 756 / JCM 1290 / NCIMB 6125 / NCTC 8237 / Type A).